The following is a 513-amino-acid chain: Maturase K (513 aa).

It belongs to the intron maturase 2 family. MatK subfamily.

It localises to the plastid. It is found in the chloroplast. Usually encoded in the trnK tRNA gene intron. Probably assists in splicing its own and other chloroplast group II introns. This chain is Maturase K, found in Panicum capillare (Witchgrass).